The sequence spans 975 residues: E3 ubiquitin-protein ligase BRE1A (975 aa).

A disordered region spans residues 1-30 (MSGIGNKRAAGEPGTSMPPEKKAAVEDSGT). N6-acetyllysine is present on Lys-21. Phosphoserine is present on Ser-41. Positions 43-90 (TEELDIRTLQTKNRKLAEMLDQRQAIEDELREHIEKLERRQATDDASL) form a coiled coil. The disordered stretch occupies residues 125-155 (KALVVPEPEPDSDSNQERKDDRERGEGQEPA). A phosphoserine mark is found at Ser-136 and Ser-138. Over residues 139–151 (NQERKDDRERGEG) the composition is skewed to basic and acidic residues. Coiled-coil stretches lie at residues 168–375 (EEME…EQVV) and 429–898 (SLHK…TTKK). An N6-acetyllysine mark is found at Lys-348 and Lys-510. The disordered stretch occupies residues 507 to 622 (DLNKTRLRSG…GKHDDGRKKE (116 aa)). A Phosphoserine modification is found at Ser-522. A compositionally biased stretch (basic and acidic residues) spans 527 to 540 (EDPKDEPAELKPDS). Residues 543–552 (LSSQSSASKA) are compositionally biased toward low complexity. Residues 558 to 622 (NEIKSKRDEE…GKHDDGRKKE (65 aa)) are compositionally biased toward basic and acidic residues. Ser-562 carries the phosphoserine modification. Residues 922–961 (CPCCNMRKKDAVLTKCFHVFCFECVKTRYDTRQRKCPKCN) form an RING-type zinc finger.

The protein belongs to the BRE1 family. As to quaternary structure, component of the RNF20/40 complex (also known as BRE1 complex) probably composed of 2 copies of RNF20/BRE1A and 2 copies of RNF40/BRE1B. Interacts with UBE2E1/UBCH6. Interacts with p53/TP53 and WAC. Interacts with PAF1; the interaction mediates the association of the PAF1 and RNF20/40 complexes which is a prerequsite for recruitment of UBE2A/B. Interacts with isoform 1 and isoform 2 of PA2G4. Interacts with FBXL19. (Microbial infection) Interacts with human herpesvirus 8 (KSHV) protein RTA/ORF50; this interaction targets the SMC5-SMC6 complex for proteasomal degradation. As to expression, expressed in the normal brain and also in malignant gliomas (at protein level).

It localises to the nucleus. It catalyses the reaction S-ubiquitinyl-[E2 ubiquitin-conjugating enzyme]-L-cysteine + [acceptor protein]-L-lysine = [E2 ubiquitin-conjugating enzyme]-L-cysteine + N(6)-ubiquitinyl-[acceptor protein]-L-lysine.. Its pathway is protein modification; protein ubiquitination. In terms of biological role, component of the RNF20/40 E3 ubiquitin-protein ligase complex that mediates monoubiquitination of 'Lys-120' of histone H2B (H2BK120ub1). H2BK120ub1 gives a specific tag for epigenetic transcriptional activation and is also prerequisite for histone H3 'Lys-4' and 'Lys-79' methylation (H3K4me and H3K79me, respectively). It thereby plays a central role inb histone code and gene regulation. The RNF20/40 complex forms a H2B ubiquitin ligase complex in cooperation with the E2 enzyme UBE2A or UBE2B; reports about the cooperation with UBE2E1/UBCH are contradictory. Required for transcriptional activation of Hox genes. Recruited to the MDM2 promoter, probably by being recruited by p53/TP53, and thereby acts as a transcriptional coactivator. Mediates the polyubiquitination of isoform 2 of PA2G4 in cancer cells leading to its proteasome-mediated degradation. (Microbial infection) Promotes the human herpesvirus 8 (KSHV) lytic cycle by inducing the expression of lytic viral genes including the latency switch gene RTA/ORF50. In Homo sapiens (Human), this protein is E3 ubiquitin-protein ligase BRE1A (RNF20).